The sequence spans 363 residues: Peptide chain release factor 2 (363 aa).

Gln251 is modified (N5-methylglutamine).

The protein belongs to the prokaryotic/mitochondrial release factor family. Post-translationally, methylated by PrmC. Methylation increases the termination efficiency of RF2.

Its subcellular location is the cytoplasm. Peptide chain release factor 2 directs the termination of translation in response to the peptide chain termination codons UGA and UAA. This chain is Peptide chain release factor 2, found in Helicobacter pylori (strain HPAG1).